Consider the following 204-residue polypeptide: uncharacterized protein (204 aa).

6 helical membrane passes run 19 to 39, 42 to 62, 78 to 98, 116 to 136, 143 to 163, and 167 to 187; these read TANP…LLNL, AGLF…GGIA, GTVA…LLVI, PVAM…MFIA, GIQV…AGEI, and ALIT…AMYV.

The protein belongs to the acetate uptake transporter (AceTr) (TC 2.A.96) family.

It localises to the cell membrane. This is an uncharacterized protein from Methanothermobacter thermautotrophicus (strain ATCC 29096 / DSM 1053 / JCM 10044 / NBRC 100330 / Delta H) (Methanobacterium thermoautotrophicum).